The chain runs to 100 residues: MFAVIETGGKQYLVKKGSVIKVEKLEAEEGKEVEIDKAVCLSGNGLSYLTDATVKAEVLEQCRGEKIIIFKKKRRKNYRRKTGHRQYITVLRINEINLQK.

Belongs to the bacterial ribosomal protein bL21 family. In terms of assembly, part of the 50S ribosomal subunit. Contacts protein L20.

In terms of biological role, this protein binds to 23S rRNA in the presence of protein L20. This chain is Large ribosomal subunit protein bL21, found in Wolbachia sp. subsp. Brugia malayi (strain TRS).